The primary structure comprises 142 residues: Large ribosomal subunit protein uL13 (142 aa).

Belongs to the universal ribosomal protein uL13 family. As to quaternary structure, part of the 50S ribosomal subunit.

This protein is one of the early assembly proteins of the 50S ribosomal subunit, although it is not seen to bind rRNA by itself. It is important during the early stages of 50S assembly. This Dictyoglomus thermophilum (strain ATCC 35947 / DSM 3960 / H-6-12) protein is Large ribosomal subunit protein uL13.